We begin with the raw amino-acid sequence, 259 residues long: UPF0246 protein PSPPH_1119 (259 aa).

The protein belongs to the UPF0246 family.

In Pseudomonas savastanoi pv. phaseolicola (strain 1448A / Race 6) (Pseudomonas syringae pv. phaseolicola (strain 1448A / Race 6)), this protein is UPF0246 protein PSPPH_1119.